Consider the following 153-residue polypeptide: Endoribonuclease YbeY (153 aa).

Zn(2+)-binding residues include histidine 116, histidine 120, and histidine 126.

This sequence belongs to the endoribonuclease YbeY family. Requires Zn(2+) as cofactor.

Its subcellular location is the cytoplasm. Functionally, single strand-specific metallo-endoribonuclease involved in late-stage 70S ribosome quality control and in maturation of the 3' terminus of the 16S rRNA. The protein is Endoribonuclease YbeY of Paraburkholderia phymatum (strain DSM 17167 / CIP 108236 / LMG 21445 / STM815) (Burkholderia phymatum).